The chain runs to 232 residues: Very-long-chain (3R)-3-hydroxyacyl-CoA dehydratase 4 (232 aa).

Residues 1–19 (MGPSVLPAWLQPRYRKNVY) lie on the Cytoplasmic side of the membrane. A helical transmembrane segment spans residues 20-40 (LFIYYLIQFCGHSWILANMTV). Topologically, residues 41-56 (RFFSFGKDSMADTFYA) are lumenal. A helical membrane pass occupies residues 57–77 (IGLVMRVCQSISLLELLHIYI). The Cytoplasmic segment spans residues 78–112 (GIESNQLFPRFLQLTERVIILFGVITSQEEVQEKC). A helical transmembrane segment spans residues 113-133 (VVCVLFILWNLLDMVRYTYSM). Topologically, residues 134–135 (LS) are lumenal. A helical transmembrane segment spans residues 136 to 156 (VIGTSYAALTWLSQTLWMPIY). Residue Y156 is part of the active site. P157 is a topological domain (cytoplasmic). A helical transmembrane segment spans residues 158 to 178 (LCVLAEAFTIYQSLPYFESFG). E163 is an active-site residue. Over 179–189 (TNSTVLPFDLS) the chain is Lumenal. A helical membrane pass occupies residues 190–210 (TCFPYVLKLYLMMLFIGMYFT). Topologically, residues 211–232 (YSHLYTERKDFLRVFSVKQKNV) are cytoplasmic.

Belongs to the very long-chain fatty acids dehydratase HACD family. As to quaternary structure, may interact with enzymes of the ELO family (including ELOVL1); with those enzymes that mediate condensation, the first of the four steps of the reaction cycle responsible for fatty acids elongation, may be part of a larger fatty acids elongase complex.

The protein resides in the endoplasmic reticulum membrane. It carries out the reaction a very-long-chain (3R)-3-hydroxyacyl-CoA = a very-long-chain (2E)-enoyl-CoA + H2O. It catalyses the reaction (3R)-hydroxyhexadecanoyl-CoA = (2E)-hexadecenoyl-CoA + H2O. It participates in lipid metabolism; fatty acid biosynthesis. Functionally, catalyzes the third of the four reactions of the long-chain fatty acids elongation cycle. This endoplasmic reticulum-bound enzymatic process, allows the addition of two carbons to the chain of long- and very long-chain fatty acids/VLCFAs per cycle. This enzyme catalyzes the dehydration of the 3-hydroxyacyl-CoA intermediate into trans-2,3-enoyl-CoA, within each cycle of fatty acid elongation. Thereby, it participates in the production of VLCFAs of different chain lengths that are involved in multiple biological processes as precursors of membrane lipids and lipid mediators. This chain is Very-long-chain (3R)-3-hydroxyacyl-CoA dehydratase 4, found in Mus musculus (Mouse).